The sequence spans 297 residues: Phosphatidylglycerol--prolipoprotein diacylglyceryl transferase (297 aa).

Transmembrane regions (helical) follow at residues 20 to 40, 57 to 77, 105 to 125, and 133 to 153; these read FITI…GLFV, EILP…YVIF, AVWE…ISII, and INLK…QSIG. R154 contributes to the a 1,2-diacyl-sn-glycero-3-phospho-(1'-sn-glycerol) binding site. Helical transmembrane passes span 193–213, 225–245, and 266–286; these read PTFL…IIIF, GFIS…IEGL, and AQFI…FLRL.

The protein belongs to the Lgt family.

It is found in the cell inner membrane. It carries out the reaction L-cysteinyl-[prolipoprotein] + a 1,2-diacyl-sn-glycero-3-phospho-(1'-sn-glycerol) = an S-1,2-diacyl-sn-glyceryl-L-cysteinyl-[prolipoprotein] + sn-glycerol 1-phosphate + H(+). It participates in protein modification; lipoprotein biosynthesis (diacylglyceryl transfer). In terms of biological role, catalyzes the transfer of the diacylglyceryl group from phosphatidylglycerol to the sulfhydryl group of the N-terminal cysteine of a prolipoprotein, the first step in the formation of mature lipoproteins. In Prochlorococcus marinus (strain MIT 9215), this protein is Phosphatidylglycerol--prolipoprotein diacylglyceryl transferase.